A 222-amino-acid chain; its full sequence is Pectate lyase A (222 aa).

The N-terminal stretch at 1-25 (MKKMLTLLLSAGLVASIFGVMPAAA) is a signal peptide.

This sequence belongs to the polysaccharide lyase 3 family. It depends on Ca(2+) as a cofactor.

It localises to the secreted. It carries out the reaction Eliminative cleavage of (1-&gt;4)-alpha-D-galacturonan to give oligosaccharides with 4-deoxy-alpha-D-galact-4-enuronosyl groups at their non-reducing ends.. It catalyses the reaction Eliminative cleavage of (1-&gt;4)-alpha-D-galacturonan methyl ester to give oligosaccharides with 4-deoxy-6-O-methyl-alpha-D-galact-4-enuronosyl groups at their non-reducing ends.. Its pathway is glycan metabolism; pectin degradation; 2-dehydro-3-deoxy-D-gluconate from pectin: step 2/5. Strongly inhibited by Ba(2+). To a lesser extent, is also inhibited by Sn(2+), Mg(2+) and Ag(+). Inhibited by EDTA in vitro. Its function is as follows. Catalyzes the depolymerization of both polygalacturonate and pectins of methyl esterification degree from 22 to 89%, with an endo mode of action. In contrast to the majority of pectate lyases, displays high activity on highly methylated pectins. Is not able to cleave trigalacturonate. Does not degrade xylans and carboxymethylcellulose (CMC). The protein is Pectate lyase A (pelA) of Paenibacillus barcinonensis.